Here is a 114-residue protein sequence, read N- to C-terminus: Vesicle-associated membrane protein 2 (114 aa).

Pro residues predominate over residues 1–11 (MSAPAAGPPAA). Residues 1-31 (MSAPAAGPPAAAPGDGAPQGPPNLTSNRRLQ) are disordered. Ser2 carries the post-translational modification N-acetylserine. The Cytoplasmic portion of the chain corresponds to 2–92 (SAPAAGPPAA…KRKYWWKNMK (91 aa)). The v-SNARE coiled-coil homology domain maps to 29–89 (RLQQTQAQVD…AKLKRKYWWK (61 aa)). Residues 93 to 111 (MMIIMGVICAIILIIIIVY) traverse the membrane as a helical; Anchor for type IV membrane protein segment. Residues 112–114 (FST) are Vesicular-facing.

This sequence belongs to the synaptobrevin family.

Its subcellular location is the cytoplasmic vesicle. The protein localises to the secretory vesicle. It is found in the synaptic vesicle membrane. The protein resides in the cell membrane. Involved in the targeting and/or fusion of transport vesicles to their target membrane. Major SNARE protein of synaptic vesicles which mediates fusion of synaptic vesicles to release neurotransmitters. Essential for fast vesicular exocytosis and activity-dependent neurotransmitter release as well as fast endocytosis that mediates rapid reuse of synaptic vesicles. The protein is Vesicle-associated membrane protein 2 (vamp2) of Xenopus laevis (African clawed frog).